We begin with the raw amino-acid sequence, 557 residues long: Formate--tetrahydrofolate ligase 2 (557 aa).

66 to 73 serves as a coordination point for ATP; sequence TPAGEGKT.

This sequence belongs to the formate--tetrahydrofolate ligase family.

It carries out the reaction (6S)-5,6,7,8-tetrahydrofolate + formate + ATP = (6R)-10-formyltetrahydrofolate + ADP + phosphate. Its pathway is one-carbon metabolism; tetrahydrofolate interconversion. This Streptococcus pyogenes serotype M6 (strain ATCC BAA-946 / MGAS10394) protein is Formate--tetrahydrofolate ligase 2.